A 426-amino-acid chain; its full sequence is Glutamate-1-semialdehyde 2,1-aminomutase (426 aa).

An N6-(pyridoxal phosphate)lysine modification is found at K265.

This sequence belongs to the class-III pyridoxal-phosphate-dependent aminotransferase family. HemL subfamily. In terms of assembly, homodimer. The cofactor is pyridoxal 5'-phosphate.

The protein localises to the cytoplasm. It carries out the reaction (S)-4-amino-5-oxopentanoate = 5-aminolevulinate. It functions in the pathway porphyrin-containing compound metabolism; protoporphyrin-IX biosynthesis; 5-aminolevulinate from L-glutamyl-tRNA(Glu): step 2/2. The sequence is that of Glutamate-1-semialdehyde 2,1-aminomutase from Actinobacillus pleuropneumoniae serotype 5b (strain L20).